A 234-amino-acid chain; its full sequence is Ubiquinone biosynthesis O-methyltransferase (234 aa).

S-adenosyl-L-methionine-binding residues include Arg-40, Gly-59, Asp-80, and Met-123.

Belongs to the methyltransferase superfamily. UbiG/COQ3 family.

The enzyme catalyses a 3-demethylubiquinol + S-adenosyl-L-methionine = a ubiquinol + S-adenosyl-L-homocysteine + H(+). The catalysed reaction is a 3-(all-trans-polyprenyl)benzene-1,2-diol + S-adenosyl-L-methionine = a 2-methoxy-6-(all-trans-polyprenyl)phenol + S-adenosyl-L-homocysteine + H(+). It functions in the pathway cofactor biosynthesis; ubiquinone biosynthesis. Functionally, O-methyltransferase that catalyzes the 2 O-methylation steps in the ubiquinone biosynthetic pathway. This Coxiella burnetii (strain CbuG_Q212) (Coxiella burnetii (strain Q212)) protein is Ubiquinone biosynthesis O-methyltransferase.